A 253-amino-acid chain; its full sequence is Acetylglutamate kinase (253 aa).

Residues 37–38, R59, and N149 each bind substrate; that span reads GG.

This sequence belongs to the acetylglutamate kinase family. ArgB subfamily.

It is found in the cytoplasm. The enzyme catalyses N-acetyl-L-glutamate + ATP = N-acetyl-L-glutamyl 5-phosphate + ADP. It participates in amino-acid biosynthesis; L-arginine biosynthesis; N(2)-acetyl-L-ornithine from L-glutamate: step 2/4. Catalyzes the ATP-dependent phosphorylation of N-acetyl-L-glutamate. The chain is Acetylglutamate kinase from Rubrobacter xylanophilus (strain DSM 9941 / JCM 11954 / NBRC 16129 / PRD-1).